A 373-amino-acid polypeptide reads, in one-letter code: UDP-N-acetylglucosamine--N-acetylmuramyl-(pentapeptide) pyrophosphoryl-undecaprenol N-acetylglucosamine transferase (373 aa).

UDP-N-acetyl-alpha-D-glucosamine-binding positions include 16-18 (TGG), asparagine 128, arginine 164, serine 192, isoleucine 250, and glutamine 295.

The protein belongs to the glycosyltransferase 28 family. MurG subfamily.

The protein localises to the cell inner membrane. It carries out the reaction di-trans,octa-cis-undecaprenyl diphospho-N-acetyl-alpha-D-muramoyl-L-alanyl-D-glutamyl-meso-2,6-diaminopimeloyl-D-alanyl-D-alanine + UDP-N-acetyl-alpha-D-glucosamine = di-trans,octa-cis-undecaprenyl diphospho-[N-acetyl-alpha-D-glucosaminyl-(1-&gt;4)]-N-acetyl-alpha-D-muramoyl-L-alanyl-D-glutamyl-meso-2,6-diaminopimeloyl-D-alanyl-D-alanine + UDP + H(+). Its pathway is cell wall biogenesis; peptidoglycan biosynthesis. Functionally, cell wall formation. Catalyzes the transfer of a GlcNAc subunit on undecaprenyl-pyrophosphoryl-MurNAc-pentapeptide (lipid intermediate I) to form undecaprenyl-pyrophosphoryl-MurNAc-(pentapeptide)GlcNAc (lipid intermediate II). This Paraburkholderia phymatum (strain DSM 17167 / CIP 108236 / LMG 21445 / STM815) (Burkholderia phymatum) protein is UDP-N-acetylglucosamine--N-acetylmuramyl-(pentapeptide) pyrophosphoryl-undecaprenol N-acetylglucosamine transferase.